A 647-amino-acid chain; its full sequence is MSFVAPDDRAYYNYSRAPGSAHGVGHESTSPDQRLPSSHSYNKSASAPNESPNQVYHPEMAGPPGSSHSYPPQPMTPLTGSTAYPPQHPPSGSYYLPTQQQQQQQSEQHIPSPPSSSNRPPSATGYTPDGQPIIPVGVSGGKMFRCRGYGDCDKVFTRSEHLARHVRKHTGERPFPCHCGKAFSRLDNLRQHAATVHAEQAQLNETMLASLAPIHAALSQRASREQRRRGEVVEVPKGAVERRRETRKAQAAAAQAAAANGHSQQNSPYAQYHESQWNAPPHPRPRTNGGYDYPYVPEHSLNDDAGPSRRPSSSAGYGYQQGYYDSARPPTAPGTGSSGESMSGLPYPYRPMSASGRELPVPAHYSESEPPATAHGPPPQSPMYGNVPPAQQQPPNWSSPPPGHGAYPPHDAAAYPPPPEGYYHPAHAAHGSYPPREDVYEYHPPGWQGQYPPAATNGGPYAQGYGTGAPPTAPPPHESPFQYNVANPGAEGYPYQNYDSRKRRAEDDFGKDDRKHPRPSSPSNSQVPDSSTAAHANGAHDAPHPHPHPGAAPGNGAMDPPRPHDPNWLPATSERRGSLAISALLGSPPKTMRSRPSTADGGAAGAHGYESYHYDPHGQVSDDQQTGVDKEREKKEEVKQQDDKKTQ.

The span at 1–10 shows a compositional bias: basic and acidic residues; that stretch reads MSFVAPDDRA. The disordered stretch occupies residues 1 to 132; it reads MSFVAPDDRA…ATGYTPDGQP (132 aa). 2 stretches are compositionally biased toward polar residues: residues 27–54 and 66–84; these read ESTS…SPNQ and SSHS…STAY. Residues 97–122 show a composition bias toward low complexity; sequence PTQQQQQQQSEQHIPSPPSSSNRPPS. 2 C2H2-type zinc fingers span residues 144 to 169 and 175 to 197; these read FRCR…VRKH and FPCH…ATVH. The tract at residues 220-647 is disordered; that stretch reads QRASREQRRR…VKQQDDKKTQ (428 aa). The span at 222–248 shows a compositional bias: basic and acidic residues; that stretch reads ASREQRRRGEVVEVPKGAVERRRETRK. Low complexity predominate over residues 249–259; it reads AQAAAAQAAAA. The segment covering 261–278 has biased composition (polar residues); the sequence is GHSQQNSPYAQYHESQWN. 3 stretches are compositionally biased toward low complexity: residues 312 to 327, 404 to 414, and 421 to 434; these read SSSA…YDSA, HGAYPPHDAAA, and GYYH…GSYP. Residues 504-515 show a composition bias toward basic and acidic residues; that stretch reads RAEDDFGKDDRK. The segment covering 521–540 has biased composition (low complexity); sequence SPSNSQVPDSSTAAHANGAH. Residues 628–647 are compositionally biased toward basic and acidic residues; it reads VDKEREKKEEVKQQDDKKTQ.

The protein resides in the nucleus. Its subcellular location is the cytoplasm. Its function is as follows. Transcription factor that promotes pheromone gene expression, which results in a subsequent increase in cell fusion. Also promotes production of melanin and capsule and thereby is required for full virulence. The polypeptide is C2H2 finger domain transcription factor USV101 (Cryptococcus neoformans var. grubii serotype A (strain H99 / ATCC 208821 / CBS 10515 / FGSC 9487) (Filobasidiella neoformans var. grubii)).